Consider the following 224-residue polypeptide: UPF0758 protein VFMJ11_0123 (224 aa).

An MPN domain is found at 102-224; sequence ALTSPEHTKR…IVSFAERGWI (123 aa). Positions 173, 175, and 186 each coordinate Zn(2+). A JAMM motif motif is present at residues 173 to 186; that stretch reads HNHPSGVAEPSQAD.

It belongs to the UPF0758 family.

In Aliivibrio fischeri (strain MJ11) (Vibrio fischeri), this protein is UPF0758 protein VFMJ11_0123.